The following is a 94-amino-acid chain: Pyrimidine/purine nucleoside phosphorylase (94 aa).

This sequence belongs to the nucleoside phosphorylase PpnP family.

It carries out the reaction a purine D-ribonucleoside + phosphate = a purine nucleobase + alpha-D-ribose 1-phosphate. The enzyme catalyses adenosine + phosphate = alpha-D-ribose 1-phosphate + adenine. It catalyses the reaction cytidine + phosphate = cytosine + alpha-D-ribose 1-phosphate. The catalysed reaction is guanosine + phosphate = alpha-D-ribose 1-phosphate + guanine. It carries out the reaction inosine + phosphate = alpha-D-ribose 1-phosphate + hypoxanthine. The enzyme catalyses thymidine + phosphate = 2-deoxy-alpha-D-ribose 1-phosphate + thymine. It catalyses the reaction uridine + phosphate = alpha-D-ribose 1-phosphate + uracil. The catalysed reaction is xanthosine + phosphate = alpha-D-ribose 1-phosphate + xanthine. Catalyzes the phosphorolysis of diverse nucleosides, yielding D-ribose 1-phosphate and the respective free bases. Can use uridine, adenosine, guanosine, cytidine, thymidine, inosine and xanthosine as substrates. Also catalyzes the reverse reactions. This chain is Pyrimidine/purine nucleoside phosphorylase, found in Vibrio parahaemolyticus serotype O3:K6 (strain RIMD 2210633).